A 273-amino-acid chain; its full sequence is Dermonecrotic toxin LruSicTox-alphaIC1b (273 aa).

Residue His5 is part of the active site. Mg(2+) is bound by residues Glu25 and Asp27. His41 (nucleophile) is an active-site residue. Disulfide bonds link Cys45–Cys51 and Cys47–Cys190. Asp85 contributes to the Mg(2+) binding site.

The protein belongs to the arthropod phospholipase D family. Class II subfamily. The cofactor is Mg(2+). Expressed by the venom gland.

It localises to the secreted. The enzyme catalyses an N-(acyl)-sphingosylphosphocholine = an N-(acyl)-sphingosyl-1,3-cyclic phosphate + choline. It catalyses the reaction an N-(acyl)-sphingosylphosphoethanolamine = an N-(acyl)-sphingosyl-1,3-cyclic phosphate + ethanolamine. The catalysed reaction is a 1-acyl-sn-glycero-3-phosphocholine = a 1-acyl-sn-glycero-2,3-cyclic phosphate + choline. It carries out the reaction a 1-acyl-sn-glycero-3-phosphoethanolamine = a 1-acyl-sn-glycero-2,3-cyclic phosphate + ethanolamine. Dermonecrotic toxins cleave the phosphodiester linkage between the phosphate and headgroup of certain phospholipids (sphingolipid and lysolipid substrates), forming an alcohol (often choline) and a cyclic phosphate. This toxin acts on sphingomyelin (SM). It may also act on ceramide phosphoethanolamine (CPE), lysophosphatidylcholine (LPC) and lysophosphatidylethanolamine (LPE), but not on lysophosphatidylserine (LPS), and lysophosphatidylglycerol (LPG). It acts by transphosphatidylation, releasing exclusively cyclic phosphate products as second products. Induces dermonecrosis, hemolysis, increased vascular permeability, edema, inflammatory response, and platelet aggregation. This Loxosceles rufescens (Mediterranean recluse spider) protein is Dermonecrotic toxin LruSicTox-alphaIC1b.